The chain runs to 324 residues: Phospho-N-acetylmuramoyl-pentapeptide-transferase (324 aa).

Helical transmembrane passes span 5 to 25, 50 to 70, 77 to 97, 117 to 137, 147 to 167, 176 to 196, 203 to 223, 227 to 247, 250 to 270, and 304 to 324; these read VMVL…PLFI, GTPT…TLLM, LSVE…LGFL, LIGQ…SGFS, LSIN…VGGS, LDGL…VLAW, IAIF…FNAH, VFMG…VAIL, LEIL…SVII, and VTFW…EVWI.

This sequence belongs to the glycosyltransferase 4 family. MraY subfamily. It depends on Mg(2+) as a cofactor.

Its subcellular location is the cell membrane. It catalyses the reaction UDP-N-acetyl-alpha-D-muramoyl-L-alanyl-gamma-D-glutamyl-meso-2,6-diaminopimeloyl-D-alanyl-D-alanine + di-trans,octa-cis-undecaprenyl phosphate = di-trans,octa-cis-undecaprenyl diphospho-N-acetyl-alpha-D-muramoyl-L-alanyl-D-glutamyl-meso-2,6-diaminopimeloyl-D-alanyl-D-alanine + UMP. The protein operates within cell wall biogenesis; peptidoglycan biosynthesis. Its function is as follows. Catalyzes the initial step of the lipid cycle reactions in the biosynthesis of the cell wall peptidoglycan: transfers peptidoglycan precursor phospho-MurNAc-pentapeptide from UDP-MurNAc-pentapeptide onto the lipid carrier undecaprenyl phosphate, yielding undecaprenyl-pyrophosphoryl-MurNAc-pentapeptide, known as lipid I. This chain is Phospho-N-acetylmuramoyl-pentapeptide-transferase, found in Geobacillus sp. (strain WCH70).